The sequence spans 205 residues: Pectinesterase inhibitor 3 (205 aa).

Positions Met1–Gly25 are cleaved as a signal peptide. Cystine bridges form between Cys38–Cys47 and Cys104–Cys156.

It belongs to the PMEI family. In terms of tissue distribution, expressed in apical meristem.

It is found in the secreted. It localises to the extracellular space. The protein resides in the apoplast. Its function is as follows. Pectin methylesterase (PME) inhibitor that can target PMEs (e.g. PME2 and PME3) in a pH-dependent manner, mainly in slightly acidic conditions (pH 6.3 and 5.0) but not at pH 7.5; this processus relies on changes in the protonation of amino acids involved in intermolecular and intramolecular interactions. Regulates de-methylesterification of pectins in the apical meristem and affects primordia formation and phyllotactic patterning. In Arabidopsis thaliana (Mouse-ear cress), this protein is Pectinesterase inhibitor 3.